Here is a 191-residue protein sequence, read N- to C-terminus: Protein LURP-one-related 6 (191 aa).

Belongs to the LOR family.

Functionally, might be related to the phospholipid scramblase and tubby-like superfamily of membrane tethered transcription factors. The sequence is that of Protein LURP-one-related 6 from Arabidopsis thaliana (Mouse-ear cress).